The following is an 827-amino-acid chain: Penicillin-binding protein 1A (827 aa).

At 1-18 (MGKKKKKRKSSAFKIILN) the chain is on the cytoplasmic side. A helical; Signal-anchor for type II membrane protein membrane pass occupies residues 19–39 (VFLSIFLVAGVAFGGIVFAMI). Residues 40 to 827 (KTAPPLNVQQ…QNHEDNKNKQ (788 aa)) are Extracellular-facing. The interval 57–229 (SILYDDKGQY…PSVYYPYSSA (173 aa)) is transglycosylase. The active-site Proton donor; for transglycosylase activity is the glutamate 96. Residues 357–641 (ASAVIMDYHN…AARLWGDIMK (285 aa)) are transpeptidase. Serine 398 functions as the Acyl-ester intermediate; for transpeptidase activity in the catalytic mechanism. Residues 755 to 827 (GSLPPTEEKN…QNHEDNKNKQ (73 aa)) form a disordered region. Positions 760–790 (TEEKNNSNTRDKNKDKNKDKDKNKNKDKNPS) are enriched in basic and acidic residues. The segment covering 791 to 817 (QDKPNNNNNNNNNDNNNNTKPPENDSN) has biased composition (low complexity). A compositionally biased stretch (basic and acidic residues) spans 818 to 827 (QNHEDNKNKQ).

The protein in the N-terminal section; belongs to the glycosyltransferase 51 family. In the C-terminal section; belongs to the transpeptidase family.

It is found in the cell membrane. It catalyses the reaction [GlcNAc-(1-&gt;4)-Mur2Ac(oyl-L-Ala-gamma-D-Glu-L-Lys-D-Ala-D-Ala)](n)-di-trans,octa-cis-undecaprenyl diphosphate + beta-D-GlcNAc-(1-&gt;4)-Mur2Ac(oyl-L-Ala-gamma-D-Glu-L-Lys-D-Ala-D-Ala)-di-trans,octa-cis-undecaprenyl diphosphate = [GlcNAc-(1-&gt;4)-Mur2Ac(oyl-L-Ala-gamma-D-Glu-L-Lys-D-Ala-D-Ala)](n+1)-di-trans,octa-cis-undecaprenyl diphosphate + di-trans,octa-cis-undecaprenyl diphosphate + H(+). The catalysed reaction is Preferential cleavage: (Ac)2-L-Lys-D-Ala-|-D-Ala. Also transpeptidation of peptidyl-alanyl moieties that are N-acyl substituents of D-alanine.. It participates in cell wall biogenesis; peptidoglycan biosynthesis. Functionally, cell wall formation. Synthesis of cross-linked peptidoglycan from the lipid intermediates. The enzyme has a penicillin-insensitive transglycosylase N-terminal domain (formation of linear glycan strands) and a penicillin-sensitive transpeptidase C-terminal domain (cross-linking of the peptide subunits). In Clostridium botulinum (strain Langeland / NCTC 10281 / Type F), this protein is Penicillin-binding protein 1A (pbpA).